We begin with the raw amino-acid sequence, 280 residues long: 2-dehydro-3-deoxyphosphooctonate aldolase (280 aa).

Belongs to the KdsA family.

It localises to the cytoplasm. It carries out the reaction D-arabinose 5-phosphate + phosphoenolpyruvate + H2O = 3-deoxy-alpha-D-manno-2-octulosonate-8-phosphate + phosphate. The protein operates within carbohydrate biosynthesis; 3-deoxy-D-manno-octulosonate biosynthesis; 3-deoxy-D-manno-octulosonate from D-ribulose 5-phosphate: step 2/3. It functions in the pathway bacterial outer membrane biogenesis; lipopolysaccharide biosynthesis. This is 2-dehydro-3-deoxyphosphooctonate aldolase from Neisseria meningitidis serogroup B (strain ATCC BAA-335 / MC58).